We begin with the raw amino-acid sequence, 322 residues long: Pantothenate kinase (322 aa).

101–108 is a binding site for ATP; it reads GSVAVGKS.

Belongs to the prokaryotic pantothenate kinase family.

Its subcellular location is the cytoplasm. It carries out the reaction (R)-pantothenate + ATP = (R)-4'-phosphopantothenate + ADP + H(+). The protein operates within cofactor biosynthesis; coenzyme A biosynthesis; CoA from (R)-pantothenate: step 1/5. This chain is Pantothenate kinase, found in Psychromonas ingrahamii (strain DSM 17664 / CCUG 51855 / 37).